Consider the following 343-residue polypeptide: Dihydroorotase (343 aa).

Positions 13 and 15 each coordinate Zn(2+). Substrate-binding positions include 15–17 (HLR) and N41. Residues K99, H136, and H174 each contribute to the Zn(2+) site. Residue K99 is modified to N6-carboxylysine. H136 provides a ligand contact to substrate. L219 lines the substrate pocket. D247 contacts Zn(2+). D247 is an active-site residue. 2 residues coordinate substrate: H251 and A263.

The protein belongs to the metallo-dependent hydrolases superfamily. DHOase family. Class II DHOase subfamily. In terms of assembly, homodimer. The cofactor is Zn(2+).

The enzyme catalyses (S)-dihydroorotate + H2O = N-carbamoyl-L-aspartate + H(+). It functions in the pathway pyrimidine metabolism; UMP biosynthesis via de novo pathway; (S)-dihydroorotate from bicarbonate: step 3/3. In terms of biological role, catalyzes the reversible cyclization of carbamoyl aspartate to dihydroorotate. In Shewanella oneidensis (strain ATCC 700550 / JCM 31522 / CIP 106686 / LMG 19005 / NCIMB 14063 / MR-1), this protein is Dihydroorotase.